The chain runs to 239 residues: tRNA (guanine-N(7)-)-methyltransferase (239 aa).

S-adenosyl-L-methionine contacts are provided by Glu-69, Glu-94, Asp-121, and Asp-144. The active site involves Asp-144. Residues Lys-148, Asp-180, and Thr-217–Glu-220 each bind substrate.

This sequence belongs to the class I-like SAM-binding methyltransferase superfamily. TrmB family. Monomer.

It catalyses the reaction guanosine(46) in tRNA + S-adenosyl-L-methionine = N(7)-methylguanosine(46) in tRNA + S-adenosyl-L-homocysteine. The protein operates within tRNA modification; N(7)-methylguanine-tRNA biosynthesis. Its function is as follows. Catalyzes the formation of N(7)-methylguanine at position 46 (m7G46) in tRNA. This chain is tRNA (guanine-N(7)-)-methyltransferase, found in Buchnera aphidicola subsp. Acyrthosiphon pisum (strain Tuc7).